Reading from the N-terminus, the 144-residue chain is Probable DNA-directed RNA polymerases I and III subunit RPAC2 (144 aa).

The interval 14–47 (KVEAETMEVDEQPQETPQVDDEEDLNVPSKKKME) is disordered. Residues 18–38 (ETMEVDEQPQETPQVDDEEDL) are compositionally biased toward acidic residues.

Belongs to the archaeal Rpo11/eukaryotic RPB11/RPC19 RNA polymerase subunit family. As to quaternary structure, component of the RNA polymerase I (Pol I) and RNA polymerase III (Pol III) complexes consisting of at least 13 and 17 subunits, respectively.

The protein resides in the nucleus. Functionally, DNA-dependent RNA polymerase catalyzes the transcription of DNA into RNA using the four ribonucleoside triphosphates as substrates. Common core component of RNA polymerases I and III which synthesize ribosomal RNA precursors and small RNAs, such as 5S rRNA and tRNAs, respectively. This is Probable DNA-directed RNA polymerases I and III subunit RPAC2 (rpac-19) from Caenorhabditis elegans.